A 260-amino-acid chain; its full sequence is Putative [LysW]-aminoadipate/[LysW]-glutamate kinase (260 aa).

Substrate-binding positions include Gly-35–Gly-36, Arg-62, and Asn-162.

It belongs to the acetylglutamate kinase family. LysZ subfamily.

Its subcellular location is the cytoplasm. The catalysed reaction is [amino-group carrier protein]-C-terminal-N-(1,4-dicarboxybutan-1-yl)-L-glutamine + ATP = [amino-group carrier protein]-C-terminal-N-(1-carboxy-5-phosphooxy-5-oxopentan-1-yl)-L-glutamine + ADP. It catalyses the reaction [amino-group carrier protein]-C-terminal-gamma-(L-glutamyl)-L-glutamate + ATP = [amino-group carrier protein]-C-terminal-gamma-(5-phospho-L-glutamyl)-L-glutamate + ADP. It functions in the pathway amino-acid biosynthesis; L-lysine biosynthesis via AAA pathway; L-lysine from L-alpha-aminoadipate (Thermus route): step 2/5. Its pathway is amino-acid biosynthesis; L-arginine biosynthesis. Its function is as follows. Involved in both the arginine and lysine biosynthetic pathways. Phosphorylates the LysW-bound precursors glutamate (for arginine biosynthesis), respectively alpha-aminoadipate (for lysine biosynthesis). The polypeptide is Putative [LysW]-aminoadipate/[LysW]-glutamate kinase (Pyrobaculum neutrophilum (strain DSM 2338 / JCM 9278 / NBRC 100436 / V24Sta) (Thermoproteus neutrophilus)).